We begin with the raw amino-acid sequence, 394 residues long: Exodeoxyribonuclease 7 large subunit (394 aa).

The protein belongs to the XseA family. In terms of assembly, heterooligomer composed of large and small subunits.

The protein localises to the cytoplasm. It catalyses the reaction Exonucleolytic cleavage in either 5'- to 3'- or 3'- to 5'-direction to yield nucleoside 5'-phosphates.. Functionally, bidirectionally degrades single-stranded DNA into large acid-insoluble oligonucleotides, which are then degraded further into small acid-soluble oligonucleotides. The polypeptide is Exodeoxyribonuclease 7 large subunit (Thermotoga maritima (strain ATCC 43589 / DSM 3109 / JCM 10099 / NBRC 100826 / MSB8)).